Here is a 51-residue protein sequence, read N- to C-terminus: Large ribosomal subunit protein eL39 (51 aa).

This sequence belongs to the eukaryotic ribosomal protein eL39 family.

In Aeropyrum pernix (strain ATCC 700893 / DSM 11879 / JCM 9820 / NBRC 100138 / K1), this protein is Large ribosomal subunit protein eL39 (rpl39e).